The following is a 509-amino-acid chain: MEICSLINRLIKYALKNSLITEDDVMFVRNELMALLHLKDWQDVKENCQIPEYPQEILDKICDYAVEQKIIEDGVTDRDIFDTEIMGKFTAFPREIIETFKELSQQNIKLATDFFYNFSKKTNYIRTERIEKNLYWKSLTEYGDLEITINLSKPEKDPKEIERQKNMPQVNYPKCLLCYENVGFAGTLTHPARQNHRVIPLTLDNERWYFQYSPYVYYNEHAIIFCSEHREMKINRDTFSRTLDFINQFPHYFIGSNADLPIVGGSILSHDHYQGGNHEFPMAKSEIEKEVIFDKYPNIKAGIVKWPMSVLRLKSLNRKDLVDLADKTLKAWREYSDEEVGVFAYTNSTPHNTITPIARKRGDYFEIDLVLRNNRTDEANPLGIFHPHSEHHNIKKENIGLIEVMGLAVLPGRLKFEMRKIAEYLKDEDFEKKISDDKDTAKHLTWLKAFINKYSNLKTLSVDEILENILNVEIGLTFSRVLEDAGVFKRDEKGKNAFLKFINHIGGRF.

This sequence belongs to the galactose-1-phosphate uridylyltransferase type 2 family.

It is found in the cytoplasm. The enzyme catalyses alpha-D-galactose 1-phosphate + UDP-alpha-D-glucose = alpha-D-glucose 1-phosphate + UDP-alpha-D-galactose. The protein operates within carbohydrate metabolism; galactose metabolism. The sequence is that of Galactose-1-phosphate uridylyltransferase from Fusobacterium nucleatum subsp. nucleatum (strain ATCC 25586 / DSM 15643 / BCRC 10681 / CIP 101130 / JCM 8532 / KCTC 2640 / LMG 13131 / VPI 4355).